Consider the following 524-residue polypeptide: 2,3-bisphosphoglycerate-independent phosphoglycerate mutase (524 aa).

The Mn(2+) site is built by D13 and S63. The Phosphoserine intermediate role is filled by S63. Substrate contacts are provided by residues H124, 154–155 (RD), R186, R192, 262–265 (RADR), and K337. Mn(2+)-binding residues include D404, H408, D445, H446, and H464.

Belongs to the BPG-independent phosphoglycerate mutase family. As to quaternary structure, monomer. Requires Mn(2+) as cofactor.

The enzyme catalyses (2R)-2-phosphoglycerate = (2R)-3-phosphoglycerate. It participates in carbohydrate degradation; glycolysis; pyruvate from D-glyceraldehyde 3-phosphate: step 3/5. In terms of biological role, catalyzes the interconversion of 2-phosphoglycerate and 3-phosphoglycerate. The polypeptide is 2,3-bisphosphoglycerate-independent phosphoglycerate mutase (Thermomicrobium roseum (strain ATCC 27502 / DSM 5159 / P-2)).